A 559-amino-acid chain; its full sequence is Germacrene A synthase (559 aa).

Residues D312, D316, D456, T460, and E464 each coordinate Mg(2+). Positions 312 to 316 (DDTYD) match the DDXXD motif motif.

The protein belongs to the terpene synthase family. In terms of assembly, monomer. Mg(2+) serves as cofactor. Expressed in glandular trichomes of all aerial tissues, with highest levels in tissues accumulating parthenolide (e.g. flowers and, to some extent, leaves).

It catalyses the reaction (2E,6E)-farnesyl diphosphate = (+)-(R)-germacrene A + diphosphate. The protein operates within secondary metabolite biosynthesis; terpenoid biosynthesis. Functionally, sesquiterpene synthase involved in germacrene A biosynthesis. Germacrene A is a precursor of several sesquiterpene lactones. The polypeptide is Germacrene A synthase (Tanacetum parthenium (Feverfew)).